Consider the following 502-residue polypeptide: MVVRDYNTELTYIERISTNSFRIKKGFQPNMNVEGIFYANSRLEKLMFDELRNSCRPGMTGGFLPGVKQIANVAALPGIVGRSVGLPDIHSGYGFAIGNMAAFDMSDPTSIVSPGGVGFDINCGVRLLRTNLFEKDVKPVQEQLAQSLFDHIPVGVGSKGIIPMNAHDLEEALEMGMDWSLREGYVWAEDKEHCEEYGRMLTADPSKVSMRAKKRGLPQLGTLGAGNHYAEIQVVEEIYDKYAASKMGIEELGQICVMIHSGSRGFGHQVATDALVEMEKAMKRDKIETNDRQLACARINSVEGQNYLKAMSAAANFAWVNRSSMTFLTRQAFAKQFNTTPDDLDMHVIYDVSHNVAKIEEHIVDGRPKQLLVHRKGSTRAFPPHHPLIPVDYQLTGQPVLVGGSMGTCSFVLTGTEKGMAETFGSTCHGAGRSLSRAKSRRNLDYRTSCGIWRRREFPSGWRRRSWSRRKHPIRTRTCVMWCRPVTTWASVPSASSCGRLR.

Positions 120, 123, 228, 260, and 354 each coordinate Mn(2+). GMP is bound at residue 227–231 (NHYAE). Residues 354 to 355 (HN), 403 to 406 (GGSM), Ser-410, and 429 to 432 (HGAG) each bind GMP. Residue His-429 is the GMP-histidine intermediate of the active site.

Belongs to the RtcB family. Catalytic component of the tRNA-splicing ligase complex. The cofactor is Mn(2+).

It catalyses the reaction a 3'-end 3'-phospho-ribonucleotide-RNA + a 5'-end dephospho-ribonucleoside-RNA + GTP = a ribonucleotidyl-ribonucleotide-RNA + GMP + diphosphate. It carries out the reaction a 3'-end 2',3'-cyclophospho-ribonucleotide-RNA + a 5'-end dephospho-ribonucleoside-RNA + GTP + H2O = a ribonucleotidyl-ribonucleotide-RNA + GMP + diphosphate + H(+). Catalytic subunit of the tRNA-splicing ligase complex that acts by directly joining spliced tRNA halves to mature-sized tRNAs by incorporating the precursor-derived splice junction phosphate into the mature tRNA as a canonical 3',5'-phosphodiester. May act as an RNA ligase with broad substrate specificity, and may function toward other RNAs. This is RNA-splicing ligase RtcB homolog 2 from Culex quinquefasciatus (Southern house mosquito).